The chain runs to 105 residues: MIVCTTENIAGYRIDKTFGEVFGLTTRSRNLVRTFGAGLKTLVGGEVVTWTQLQDQARLEAIERLKNNADKIGANAVTMMRFDSNEANGIMSVVAYGTAVKVSEL.

This sequence belongs to the UPF0145 family.

The sequence is that of UPF0145 protein OEOE_0637 from Oenococcus oeni (strain ATCC BAA-331 / PSU-1).